A 691-amino-acid polypeptide reads, in one-letter code: UvrABC system protein C (691 aa).

One can recognise a GIY-YIG domain in the interval 20 to 97; that stretch reads STSGVYLWKD…IKKHTPRYNI (78 aa). One can recognise a UVR domain in the interval 204 to 239; it reads DATVARLEKRMKRAVRQEAFEAAARIRDDIQAIRCI. The interval 662–691 is disordered; the sequence is RSTTAPVREEYKEHEHDPQGESPGPGRKTD. Positions 668–680 are enriched in basic and acidic residues; that stretch reads VREEYKEHEHDPQ.

It belongs to the UvrC family. As to quaternary structure, interacts with UvrB in an incision complex.

The protein resides in the cytoplasm. In terms of biological role, the UvrABC repair system catalyzes the recognition and processing of DNA lesions. UvrC both incises the 5' and 3' sides of the lesion. The N-terminal half is responsible for the 3' incision and the C-terminal half is responsible for the 5' incision. In Treponema pallidum (strain Nichols), this protein is UvrABC system protein C.